The primary structure comprises 452 residues: Deoxybrevianamide E synthase notF (452 aa).

A compositionally biased stretch (basic and acidic residues) spans 1–19 (MTAPELRVDTFRAPEDAPK). Positions 1–38 (MTAPELRVDTFRAPEDAPKEPSAQQPRLPSSPSPAQAL) are disordered. Positions 21–38 (PSAQQPRLPSSPSPAQAL) are enriched in low complexity. Residue Glu-108 participates in brevianamide F binding. Residues Arg-122, Lys-212, Tyr-214, Lys-282, Tyr-284, Tyr-371, Tyr-436, and Tyr-440 each contribute to the dimethylallyl diphosphate site.

It belongs to the tryptophan dimethylallyltransferase family. As to quaternary structure, monomer.

It catalyses the reaction brevianamide F + dimethylallyl diphosphate = deoxybrevianamide E + diphosphate. The protein operates within alkaloid biosynthesis. Its activity is regulated as follows. Addition of 5 mM Mg(2+), Ca(2+) or Mn(2+) slightly enhances catalysis (about 100-120%). Significant reduction of enzyme activity (2%-35%) is observed with Cu(2+), Zn(2+), Fe(2+), or Sn(2+) (5 mM). In terms of biological role, deoxybrevianamide E synthase; part of the gene cluster that mediates the biosynthesis of notoamide, a fungal indole alkaloid that belongs to a family of natural products containing a characteristic bicyclo[2.2.2]diazaoctane core. The first step of notoamide biosynthesis involves coupling of L-proline and L-tryptophan by the bimodular NRPS notE, to produce cyclo-L-tryptophan-L-proline called brevianamide F. The reverse prenyltransferase notF then acts as a deoxybrevianamide E synthase and converts brevianamide F to deoxybrevianamide E via reverse prenylation at C-2 of the indole ring leading to the bicyclo[2.2.2]diazaoctane core. Deoxybrevianamide E is further hydroxylated at C-6 of the indole ring, likely catalyzed by the cytochrome P450 monooxygenase notG, to yield 6-hydroxy-deoxybrevianamide E. 6-hydroxy-deoxybrevianamide E is a specific substrate of the prenyltransferase notC for normal prenylation at C-7 to produce 6-hydroxy-7-prenyl-deoxybrevianamide, also called notoamide S. As the proposed pivotal branching point in notoamide biosynthesis, notoamide S can be diverted to notoamide E through an oxidative pyran ring closure putatively catalyzed by either notH cytochrome P450 monooxygenase or the notD FAD-linked oxidoreductase. This step would be followed by an indole 2,3-epoxidation-initiated pinacol-like rearrangement catalyzed by the notB FAD-dependent monooxygenase leading to the formation of notoamide C and notoamide D. On the other hand notoamide S is converted to notoamide T by notH (or notD), a bifunctional oxidase that also functions as the intramolecular Diels-Alderase responsible for generation of (+)-notoamide T. To generate antipodal (-)-notoaminide T, notH' (or notD') in Aspergillus versicolor is expected to catalyze a Diels-Alder reaction leading to the opposite stereochemistry. The remaining oxidoreductase notD (or notH) likely catalyzes the oxidative pyran ring formation to yield (+)-stephacidin A. The FAD-dependent monooxygenase notI is highly similar to notB and is predicted to catalyze a similar conversion from (+)-stephacidin A to (-)-notoamide B via the 2,3-epoxidation of (+)-stephacidin A followed by a pinacol-type rearrangement. Finally, it remains unclear which enzyme could be responsible for the final hydroxylation steps leading to notoamide A and sclerotiamide. The protein is Deoxybrevianamide E synthase notF of Aspergillus sp. (strain MF297-2).